The sequence spans 199 residues: uncharacterized protein (199 aa).

Residues 72 to 116 (EIYSEIENEESDIEEMSEEMKAFFAKTQEHRQKLKEQRAAEKRKE) adopt a coiled-coil conformation. Residues 98-117 (TQEHRQKLKEQRAAEKRKEG) show a composition bias toward basic and acidic residues. Residues 98-127 (TQEHRQKLKEQRAAEKRKEGQSSSKSQEEY) form a disordered region.

This is an uncharacterized protein from Caenorhabditis elegans.